The primary structure comprises 1331 residues: MMMDILNTQQQKAAEGGRVLAPHTISSKLVKRLSSHSSHKLSRSDLKALGGSETISDGPSQLTFKDRYVFNESLYLKKLKKTALDDYYTRGIKLTNRYEEDDGDDEIIRLSNGDRIDEDLHSGVKFFSTTPYCRKMRSDSDELAWNEIATERFKWQSMLARVLKGDIVKGEKTRIANQVKKPGLNKELSDEIWLELKAWLNGRTMQEMEQSLTYLRDSSDSVFEEIMKFQIPQGKILSLDALEAILQDLMNRYHSVVSYWPNLKKMYKDKPITNTAEFTARIDVMNSWLNFKTNLTLRRQELDDWINRFSPISSSDNCQEDFDGVPQWNCKMKILAEQLMKEKNIESIFQKKIFYPLSPWMFKLKLHFIVYRETLTKMNIKYPYERLRSLLAFPVYLIKEVILTRLSYARKLKNPTMMMIDQMIDDFNAFIRLSVQLKYTLTKYCSNLPFDVDFDPTFENTVIEAIRYLFFLLNLKLIDSSKQNFKAPDLLLKYWDHLKNTGHYINGAETVIPNEFLKLTLRLVHKLQFYLLKQQNFPPTFANASEAEKWLSSIFENLGAMKRKLNRFSNILVKAFQNSAVYQINHNAQLVKKLKDAHYFLVYSGNTFESSGVYMFAAPELLGCDNDTILRILRNKSIGCDLVPKLDIGNNLNVYDITTKETDLNILVSKGEDSKGIPYYRVVANSSSDLDRHAHQSKKKNFSTDPFDQHLDEKNNEVFELEVALSSLGALVVLYPGEPVVWDGPVYKLPGNNLFASNEMDLGKIGNPNTLILLNQGSNYALTYQIDKFNQTVGDSVSFIEKRCSLNSIESSLQKINKAYYKLTYTVLNNYKGILGSFMKQCPGNELLNSIFMFGRDFGRSFLKYNAFSSKRKYVIIFLMVKLGMNWLKFLVEECDPTDQRTFRWCVLAMDFAMQMTSGYNILALNVKQFQELKERVSVCMSLLISHFDVMGARATEAENGMQQARLNIDTEENIDEEATLEINSRLRLEAIKTLEKTMKRNPRQMGKVLDATDQGNKYLLSLASSLSNVSMRWQKRSFIGGGTFGQVYSAINLENGEILAVKEIKIHDTTTMKKIFPLIKEEMTVLEMLNHPNIVQYYGVEVHRDKVNIFMEYCEGGSLASLLDHGRIEDEMVTQVYTFELLEGLAYLHQSGVVHRDIKPENILLDFNGIIKYVDFGTARTVVGSRTRTVRNAAVQDFGVETKSLNEMMGTPMYMAPETISGSAVKGKLGADDVWALGCVVLEMATGRRPWSNLDNEWAIMYHVAAGRIPQLPNRDEMTAAGRAFLERCLVQDPTMRATAVELLIDPWMIQIREIAFGNSEKDQVPILSS.

The 277-residue stretch at 1034–1310 (WQKRSFIGGG…AVELLIDPWM (277 aa)) folds into the Protein kinase domain. ATP is bound by residues 1040 to 1048 (IGGGTFGQV) and lysine 1063. Aspartate 1158 serves as the catalytic Proton acceptor.

It belongs to the protein kinase superfamily. STE Ser/Thr protein kinase family. MAP kinase kinase kinase subfamily. In terms of assembly, interacts with by SSK1.

The enzyme catalyses L-seryl-[protein] + ATP = O-phospho-L-seryl-[protein] + ADP + H(+). It catalyses the reaction L-threonyl-[protein] + ATP = O-phospho-L-threonyl-[protein] + ADP + H(+). In terms of biological role, kinase involved in a signal transduction pathway that is activated by changes in the osmolarity of the extracellular environment. Activates the PBS2 MAP kinase kinase by phosphorylation. This is Serine/threonine-protein kinase SSK22 (SSK22) from Saccharomyces cerevisiae (strain ATCC 204508 / S288c) (Baker's yeast).